We begin with the raw amino-acid sequence, 2353 residues long: Otogelin-like protein (2353 aa).

Positions 1–31 (MNIVRKLNLMIPWSIFLLHVLLFSLQEYICA) are cleaved as a signal peptide. The VWFD 1 domain maps to 121 to 297 (GICKTWGQYH…VQTPDDTKCV (177 aa)). 2 cysteine pairs are disulfide-bonded: Cys-123/Cys-257 and Cys-145/Cys-296. Residue Asn-144 is glycosylated (N-linked (GlcNAc...) asparagine). Residues 390–443 (CDDSFVHRDCISCCPPTCTFEKQCLGSNLHCLDGCYCPDGLVMDNGTCISLENC) enclose the TIL 1 domain. Asn-434 and Asn-473 each carry an N-linked (GlcNAc...) asparagine glycan. A VWFD 2 domain is found at 481–654 (VQCSVVGDSH…NAWRVSSTCF (174 aa)). Intrachain disulfides connect Cys-483–Cys-618, Cys-505–Cys-653, and Cys-527–Cys-535. Positions 745–800 (CQKGMLYHHCSSFCLHSCISLSSPEQCSDDCAEGCNCPEGKFYEDTLNFCVPIFHC) constitute a TIL 2 domain. N-linked (GlcNAc...) asparagine glycosylation is found at Asn-826 and Asn-876. Residues 946-1115 (AVCTIYGDRH…SWALGQCESP (170 aa)) form the VWFD 3 domain. 2 disulfides stabilise this stretch: Cys-948-Cys-1078 and Cys-992-Cys-999. Residues Asn-1289, Asn-1604, and Asn-2198 are each glycosylated (N-linked (GlcNAc...) asparagine). The region spanning 1534-1723 (CRCSMLSELS…SWEIEKSFEV (190 aa)) is the VWFD 4 domain. Residues Cys-1536 and Cys-1683 are joined by a disulfide bond. 4 disulfide bridges follow: Cys-2261/Cys-2317, Cys-2282/Cys-2331, Cys-2293/Cys-2348, and Cys-2297/Cys-2350. One can recognise a CTCK domain in the interval 2261-2353 (CKREERICQK…EPIDCTCQWN (93 aa)).

Belongs to the otogelin family. In terms of tissue distribution, expressed at high levels in fetal inner ear and heart. Low levels in fetal skeletal muscle, kidney, spleen and colon. Not detected in fetal liver, lung, brain, nor in fetal stomach. In adult tissues, highest levels in brain, kidney, heart and retina. Relatively low levels in lung, spleen and duodenum. Not detected in adult skeletal muscle, liver, nor testis.

Its subcellular location is the secreted. The protein is Otogelin-like protein (OTOGL) of Homo sapiens (Human).